The sequence spans 151 residues: MSESILEEAQRLIHGERNKNYGHPRENFKDIALLFSGYLEKEISDIDVANLMILMKIARVKGTGYHRDSFTDMAGYAGCVERIYEEPVEGEPRQWDTLADVPKDVKTVRSAGNAFWSRYPDYNERLWGHRDGFKLDHAKISEGPFVEVLGE.

This is Gene 55 protein (55) from Mycobacterium phage D29 (Mycobacteriophage D29).